The chain runs to 291 residues: uncharacterized protein (291 aa).

Positions 2–62 constitute an HTH tetR-type domain; it reads KEKEKLIIET…SMLNYYYDKT (61 aa). The H-T-H motif DNA-binding region spans 25–44; it reads SVQEIAKECKISKGAFYIYF.

This is an uncharacterized protein from Bacillus subtilis (strain 168).